We begin with the raw amino-acid sequence, 78 residues long: Putative membrane protein insertion efficiency factor (78 aa).

This sequence belongs to the UPF0161 family.

It localises to the cell inner membrane. In terms of biological role, could be involved in insertion of integral membrane proteins into the membrane. The protein is Putative membrane protein insertion efficiency factor of Roseobacter denitrificans (strain ATCC 33942 / OCh 114) (Erythrobacter sp. (strain OCh 114)).